A 719-amino-acid polypeptide reads, in one-letter code: Ribosomal RNA large subunit methyltransferase K/L (719 aa).

In terms of domain architecture, THUMP spans 43-154; it reads IGYKACLWSR…KGKANITLDL (112 aa).

It belongs to the methyltransferase superfamily. RlmKL family.

It localises to the cytoplasm. It carries out the reaction guanosine(2445) in 23S rRNA + S-adenosyl-L-methionine = N(2)-methylguanosine(2445) in 23S rRNA + S-adenosyl-L-homocysteine + H(+). The catalysed reaction is guanosine(2069) in 23S rRNA + S-adenosyl-L-methionine = N(2)-methylguanosine(2069) in 23S rRNA + S-adenosyl-L-homocysteine + H(+). Functionally, specifically methylates the guanine in position 2445 (m2G2445) and the guanine in position 2069 (m7G2069) of 23S rRNA. This is Ribosomal RNA large subunit methyltransferase K/L from Aeromonas salmonicida (strain A449).